The primary structure comprises 328 residues: Fructokinase-2 (328 aa).

The protein belongs to the carbohydrate kinase PfkB family.

It carries out the reaction D-fructose + ATP = D-fructose 6-phosphate + ADP + H(+). It participates in glycan biosynthesis; starch biosynthesis. May play an important role in maintaining the flux of carbon towards starch formation. The polypeptide is Fructokinase-2 (FRK2) (Solanum habrochaites (Wild tomato)).